We begin with the raw amino-acid sequence, 787 residues long: ISWI one complex protein 3 (787 aa).

The span at 1–22 (MDSPSNSIQNLQQEAQGSSSAQ) shows a compositional bias: polar residues. Disordered stretches follow at residues 1–137 (MDSP…AHEQ), 672–693 (ILEQ…LPKD), and 749–787 (TEYD…RQRT). Over residues 40-50 (DQSVSVSQSSD) the composition is skewed to low complexity. A compositionally biased stretch (basic residues) spans 79-92 (KPKRKRPAPPKKKA). Positions 100 to 137 (SNDKVEKKKTTSIAKDGKPTLKTNDKKVAPKPKPAHEQ) are enriched in basic and acidic residues. Residues 675–689 (QKSTTDNNPSINTNP) show a composition bias toward polar residues. Residues 751–777 (YDSEEYVDDEEDDEADIYDDNDNDSSF) show a composition bias toward acidic residues. A compositionally biased stretch (basic and acidic residues) spans 778–787 (DDGRVKRQRT).

Component of the ISW1A complex, which at least consists of ISW1 and IOC3.

It localises to the nucleus. Functions as a component of the ISW1A complex, which acts in remodeling the chromatin by catalyzing an ATP-dependent alteration in the structure of nucleosomal DNA. The ISW1A complex represses gene expression at initiation through specific positioning of a promoter proximal dinucleosome. The protein is ISWI one complex protein 3 (IOC3) of Saccharomyces cerevisiae (strain ATCC 204508 / S288c) (Baker's yeast).